We begin with the raw amino-acid sequence, 542 residues long: Cytochrome P450 734A6 (542 aa).

A helical membrane pass occupies residues 2–22 (GWWGWAAAAAAAAAWVAVKVL). Position 474 (C474) interacts with heme.

The protein belongs to the cytochrome P450 family. Requires heme as cofactor. As to expression, highly expressed in leaf sheaths. Expressed in roots, shoot apex, leaf blades, internodes and panicles.

The protein localises to the membrane. Cytochrome P450 involved in brassinosteroids (BRs) inactivation and regulation of BRs homeostasis. Is a multifunctional and multisubstrate enzyme that controls the endogenous bioactive BR content both by direct inactivation of castasterone (CS) and by decreasing the levels of BR precursors. Catalyzes the oxidation of carbon 22 hydroxylated BR intermediates to produce C26 oxidized metabolites. This Oryza sativa subsp. japonica (Rice) protein is Cytochrome P450 734A6 (CYP734A6).